The chain runs to 530 residues: Pancreatic secretory granule membrane major glycoprotein GP2 (530 aa).

Residues 1–21 (MVACDLLWLAAASCLLTLVFP) form the signal peptide. N33 is a glycosylation site (N-linked (GlcNAc...) asparagine). 11 disulfides stabilise this stretch: C41/C52, C56/C150, C78/C168, C100/C138, C106/C173, C131/C139, C183/C193, C187/C202, C204/C234, C222/C313, and C254/C277. Residues 54 to 74 (DPCQNHTVLNDPSRSTENTVS) are D10C. N58 and N127 each carry an N-linked (GlcNAc...) asparagine glycan. Residues 179–223 (APKKCEIACRPEEECVFQNNSWTCVCRQDLNVSDTLSLQPLLDCG) form the EGF-like domain. 2 N-linked (GlcNAc...) asparagine glycosylation sites follow: N197 and N209. Residues 221-314 (DCGANEIKVK…FLVNVNFQCA (94 aa)) are ZP-N. In terms of domain architecture, ZP spans 221-477 (DCGANEIKVK…PSCSTSRLRS (257 aa)). Residues N284 and N320 are each glycosylated (N-linked (GlcNAc...) asparagine). Positions 315–338 (YPLDMNVSLQTALQPIVSSLNVDV) are flexible ZP-N/ZP-C linker. The segment at 339–350 (GGAGEFTVTMAL) is internal hydrophobic patch (IHP). The segment at 339–477 (GGAGEFTVTM…PSCSTSRLRS (139 aa)) is ZP-C. Cystine bridges form between C394-C454, C415-C470, and C459-C466. The external hydrophobic patch (EHP) stretch occupies residues 484 to 492 (LTRVLDIGP). A lipid anchor (GPI-anchor amidated asparagine) is attached at N505. A propeptide spans 506 to 530 (GTPRNTGFLLAWPTFFLPVFLAWLF) (removed in mature form).

Interacts with SYCN. Interacts with bacterial adhesin fimH. Post-translationally, N-glycosylated. In terms of tissue distribution, expressed in pancreas.

It localises to the zymogen granule membrane. It is found in the secreted. The protein localises to the cell membrane. Its subcellular location is the apical cell membrane. The protein resides in the membrane raft. It localises to the endosome. Functions as an intestinal M-cell transcytotic receptor specific of type-I-piliated bacteria that participates in the mucosal immune response toward these bacteria. At the apical membrane of M-cells it binds fimH, a protein of the bacteria type I pilus tip. Internalizes bound bacteria, like E.coli and S.typhimurium, from the lumen of the intestine and delivers them, through M-cells, to the underlying organized lymphoid follicles where they are captured by antigen-presenting dendritic cells to elicit a mucosal immune response. The chain is Pancreatic secretory granule membrane major glycoprotein GP2 from Rattus norvegicus (Rat).